Here is a 545-residue protein sequence, read N- to C-terminus: Ribulokinase (545 aa).

Belongs to the ribulokinase family.

It catalyses the reaction D-ribulose + ATP = D-ribulose 5-phosphate + ADP + H(+). The enzyme catalyses L-ribulose + ATP = L-ribulose 5-phosphate + ADP + H(+). It functions in the pathway carbohydrate degradation; L-arabinose degradation via L-ribulose; D-xylulose 5-phosphate from L-arabinose (bacterial route): step 2/3. This chain is Ribulokinase, found in Staphylococcus aureus (strain MSSA476).